The following is a 103-amino-acid chain: Large ribosomal subunit protein uL24 (103 aa).

It belongs to the universal ribosomal protein uL24 family. As to quaternary structure, part of the 50S ribosomal subunit.

Functionally, one of two assembly initiator proteins, it binds directly to the 5'-end of the 23S rRNA, where it nucleates assembly of the 50S subunit. In terms of biological role, one of the proteins that surrounds the polypeptide exit tunnel on the outside of the subunit. This chain is Large ribosomal subunit protein uL24, found in Ruthia magnifica subsp. Calyptogena magnifica.